Here is a 147-residue protein sequence, read N- to C-terminus: Large ribosomal subunit protein uL13 (147 aa).

This sequence belongs to the universal ribosomal protein uL13 family. Part of the 50S ribosomal subunit.

Its function is as follows. This protein is one of the early assembly proteins of the 50S ribosomal subunit, although it is not seen to bind rRNA by itself. It is important during the early stages of 50S assembly. The chain is Large ribosomal subunit protein uL13 from Polaromonas naphthalenivorans (strain CJ2).